The primary structure comprises 301 residues: 33 kDa chaperonin (301 aa).

Intrachain disulfides connect Cys-240/Cys-242 and Cys-273/Cys-276.

This sequence belongs to the HSP33 family. Under oxidizing conditions two disulfide bonds are formed involving the reactive cysteines. Under reducing conditions zinc is bound to the reactive cysteines and the protein is inactive.

It is found in the cytoplasm. Functionally, redox regulated molecular chaperone. Protects both thermally unfolding and oxidatively damaged proteins from irreversible aggregation. Plays an important role in the bacterial defense system toward oxidative stress. The chain is 33 kDa chaperonin from Rippkaea orientalis (strain PCC 8801 / RF-1) (Cyanothece sp. (strain PCC 8801)).